The following is a 445-amino-acid chain: MKQRQFFGTDGIRGKVGAGKMTPELALKLGWAAGRVLSRAGTHKVIIGKDTRISGYLFESALEAGLSAAGLDVMLIGPMPTPAVAYLTRTFRAEAGIVISASHNPYYDNGIKFFYTDGSKLEDAVELEIEAELEKPLTCVESHLLGKVGRIDDAAGRYIEYCKSHFPAEQTLSGLKIVVDCAHGATYHIAPSVFKELGAEVIAIGDKPNGLNINDKVGATSMAKICETVLEENADLGIALDGDGDRIMMVNRHGRVIDGDEILYILACDAQKRGVLQGGVVGTLMSNLGLDLALQALDIPFVRSKVGDRYVMELLKEHDWKIGGENSGHILNLDHGTTGDGIVAGILVLAAMCRQSASLEELTAGITMLPQVLVNVRFEGADDPLSSEVVLAAKAEVEQKLGARGRVLLRKSGTEPLLRVMVEGDDRADVTQFANDIADAVRNLV.

The active-site Phosphoserine intermediate is the Ser102. Residues Ser102, Asp241, Asp243, and Asp245 each coordinate Mg(2+). The residue at position 102 (Ser102) is a Phosphoserine.

The protein belongs to the phosphohexose mutase family. Mg(2+) serves as cofactor. Activated by phosphorylation.

It catalyses the reaction alpha-D-glucosamine 1-phosphate = D-glucosamine 6-phosphate. Catalyzes the conversion of glucosamine-6-phosphate to glucosamine-1-phosphate. This is Phosphoglucosamine mutase from Shewanella piezotolerans (strain WP3 / JCM 13877).